Consider the following 450-residue polypeptide: Bifunctional apoptosis regulator (450 aa).

The segment at 1–24 (MEEPQKNDLSMRGQEEDHPVRSSG) is disordered. Topologically, residues 1-140 (MEEPQKNDLS…PSTGRVNQQR (140 aa)) are cytoplasmic. Residues 34–74 (CHCCYDTLVNPTTLNCGHSFCRHCLALWWMSSKKTECPECR) form an RING-type zinc finger. The chain crosses the membrane as a helical span at residues 141–161 (GGGFFSGVLTALTGVAVILLV). Residues 162-331 (YHWRSRESEH…REPTWKQWRE (170 aa)) lie on the Extracellular side of the membrane. Residues 182–249 (WTTEEVVLWL…LMELERVRAL (68 aa)) form the SAM domain. N-linked (GlcNAc...) asparagine glycosylation occurs at asparagine 232. The helical transmembrane segment at 332–352 (FLIKYSFLPYQLIAEFAWDWL) threads the bilayer. The Cytoplasmic segment spans residues 353–360 (EVHYWTSR). The helical transmembrane segment at 361–381 (FLIVNAMLLSVLELFSFWRIW) threads the bilayer. Topologically, residues 382-404 (SRSELKTVPQRMWSHFWKVSTQG) are extracellular. A helical transmembrane segment spans residues 405–425 (LFMAMFWPLIPQFVCNCLFYW). Topologically, residues 426 to 450 (ALYFNPIINIDLVVKEIRRLETQVF) are cytoplasmic.

In terms of assembly, interacts with CASP8, BCL2 and BCL2L1 through SAM domain and also with HIP1, IFT57, ESRRBL1 and BCAP31. Interacts with NGFR; this interaction inhibits NF-kappa-B and JNK-related signaling pathways. In terms of processing, mediates RING-dependent self-ubiquitination leading to proteasomal degradation.

It localises to the endoplasmic reticulum membrane. The enzyme catalyses S-ubiquitinyl-[E2 ubiquitin-conjugating enzyme]-L-cysteine + [acceptor protein]-L-lysine = [E2 ubiquitin-conjugating enzyme]-L-cysteine + N(6)-ubiquitinyl-[acceptor protein]-L-lysine.. Its function is as follows. Membrane-bound E3 ubiquitin ligase that plays a role in several processes including apoptosis regulation or reticulum endoplasmic stress. Has anti-apoptotic activity, both for apoptosis triggered via death-receptors and via mitochondrial factors. Contributes to the dynamic control of IRE1/ERN1 signaling during ER stress by inducing BAX inhibitor 1/TMBIM6 proteasomal degradation. Promotes the activation of TGF-beta signaling by mediating the 'Lys-63'-linked ubiquitination of TGFBR1 which is critical to activate the pathway. Together with NGFR, negatively regulates NF-kappa-B and JNK-related signaling pathways. Promotes the proteasome-mediated degradation of PNPLA3, a protein involveld in lipid metabolism. This chain is Bifunctional apoptosis regulator (Bfar), found in Rattus norvegicus (Rat).